The following is a 132-amino-acid chain: Two-component response regulator ORR42 (132 aa).

In terms of domain architecture, Response regulatory spans Arg-11–Ser-125. Position 61 is a 4-aspartylphosphate (Asp-61).

The protein belongs to the ARR family. Type-C subfamily. Two-component system major event consists of a His-to-Asp phosphorelay between a sensor histidine kinase (HK) and a response regulator (RR). In plants, the His-to-Asp phosphorelay involves an additional intermediate named Histidine-containing phosphotransfer protein (HPt). This multistep phosphorelay consists of a His-Asp-His-Asp sequential transfer of a phosphate group between first a His and an Asp of the HK protein, followed by the transfer to a conserved His of the HPt protein and finally the transfer to an Asp in the receiver domain of the RR protein.

Functionally, functions as a response regulator involved in His-to-Asp phosphorelay signal transduction system. Phosphorylation of the Asp residue in the receiver domain activates the ability of the protein to promote the transcription of target genes. May directly activate some type-A response regulators in response to cytokinins. The protein is Two-component response regulator ORR42 of Oryza sativa subsp. japonica (Rice).